Here is a 347-residue protein sequence, read N- to C-terminus: Epimerase family protein SDR39U1 homolog, chloroplastic (347 aa).

Residues 1 to 37 constitute a chloroplast transit peptide; it reads MELLCSPTSLSSSFALSSALLVPRSFSMPGTRRFMVL. Residues 54–57, 76–77, 115–119, and Arg-136 contribute to the NADP(+) site; these read TGFI, TR, and LAGLP.

In terms of assembly, can form homodimers. Expressed in leaves, stems and flower buds.

The protein localises to the plastid. It is found in the chloroplast inner membrane. The protein resides in the chloroplast. Its function is as follows. Putative NADP-dependent oxidoreductase that acts as a positive regulator of chloroplast division. May play a role at an early stage of the division process. The chain is Epimerase family protein SDR39U1 homolog, chloroplastic from Arabidopsis thaliana (Mouse-ear cress).